The primary structure comprises 451 residues: Uronate isomerase (451 aa).

It belongs to the metallo-dependent hydrolases superfamily. Uronate isomerase family.

It carries out the reaction D-glucuronate = D-fructuronate. The catalysed reaction is aldehydo-D-galacturonate = keto-D-tagaturonate. The protein operates within carbohydrate metabolism; pentose and glucuronate interconversion. This Thermotoga neapolitana (strain ATCC 49049 / DSM 4359 / NBRC 107923 / NS-E) protein is Uronate isomerase.